Here is a 293-residue protein sequence, read N- to C-terminus: Acetylglutamate kinase (293 aa).

Substrate is bound by residues 68 to 69 (GG), Arg90, and Asn189.

This sequence belongs to the acetylglutamate kinase family. ArgB subfamily.

Its subcellular location is the cytoplasm. The enzyme catalyses N-acetyl-L-glutamate + ATP = N-acetyl-L-glutamyl 5-phosphate + ADP. Its pathway is amino-acid biosynthesis; L-arginine biosynthesis; N(2)-acetyl-L-ornithine from L-glutamate: step 2/4. Catalyzes the ATP-dependent phosphorylation of N-acetyl-L-glutamate. The sequence is that of Acetylglutamate kinase from Mycobacterium ulcerans (strain Agy99).